The sequence spans 490 residues: Aspartyl/glutamyl-tRNA(Asn/Gln) amidotransferase subunit B (490 aa).

This sequence belongs to the GatB/GatE family. GatB subfamily. As to quaternary structure, heterotrimer of A, B and C subunits.

It catalyses the reaction L-glutamyl-tRNA(Gln) + L-glutamine + ATP + H2O = L-glutaminyl-tRNA(Gln) + L-glutamate + ADP + phosphate + H(+). The enzyme catalyses L-aspartyl-tRNA(Asn) + L-glutamine + ATP + H2O = L-asparaginyl-tRNA(Asn) + L-glutamate + ADP + phosphate + 2 H(+). Its function is as follows. Allows the formation of correctly charged Asn-tRNA(Asn) or Gln-tRNA(Gln) through the transamidation of misacylated Asp-tRNA(Asn) or Glu-tRNA(Gln) in organisms which lack either or both of asparaginyl-tRNA or glutaminyl-tRNA synthetases. The reaction takes place in the presence of glutamine and ATP through an activated phospho-Asp-tRNA(Asn) or phospho-Glu-tRNA(Gln). In Burkholderia vietnamiensis (strain G4 / LMG 22486) (Burkholderia cepacia (strain R1808)), this protein is Aspartyl/glutamyl-tRNA(Asn/Gln) amidotransferase subunit B.